The chain runs to 354 residues: S-adenosylmethionine:tRNA ribosyltransferase-isomerase (354 aa).

It belongs to the QueA family. In terms of assembly, monomer.

It localises to the cytoplasm. It carries out the reaction 7-aminomethyl-7-carbaguanosine(34) in tRNA + S-adenosyl-L-methionine = epoxyqueuosine(34) in tRNA + adenine + L-methionine + 2 H(+). It functions in the pathway tRNA modification; tRNA-queuosine biosynthesis. In terms of biological role, transfers and isomerizes the ribose moiety from AdoMet to the 7-aminomethyl group of 7-deazaguanine (preQ1-tRNA) to give epoxyqueuosine (oQ-tRNA). The sequence is that of S-adenosylmethionine:tRNA ribosyltransferase-isomerase from Salmonella dublin (strain CT_02021853).